The primary structure comprises 467 residues: ATP synthase subunit beta (467 aa).

ATP is bound at residue 152 to 159 (GGAGVGKT).

This sequence belongs to the ATPase alpha/beta chains family. In terms of assembly, F-type ATPases have 2 components, CF(1) - the catalytic core - and CF(0) - the membrane proton channel. CF(1) has five subunits: alpha(3), beta(3), gamma(1), delta(1), epsilon(1). CF(0) has three main subunits: a(1), b(2) and c(9-12). The alpha and beta chains form an alternating ring which encloses part of the gamma chain. CF(1) is attached to CF(0) by a central stalk formed by the gamma and epsilon chains, while a peripheral stalk is formed by the delta and b chains.

Its subcellular location is the cell membrane. It carries out the reaction ATP + H2O + 4 H(+)(in) = ADP + phosphate + 5 H(+)(out). Its function is as follows. Produces ATP from ADP in the presence of a proton gradient across the membrane. The catalytic sites are hosted primarily by the beta subunits. The chain is ATP synthase subunit beta from Caldicellulosiruptor bescii (strain ATCC BAA-1888 / DSM 6725 / KCTC 15123 / Z-1320) (Anaerocellum thermophilum).